A 230-amino-acid polypeptide reads, in one-letter code: Dephospho-CoA kinase (230 aa).

The segment at 1 to 20 is disordered; that stretch reads MSKYAAIPSPYSHQPQAPDH. The DPCK domain maps to 26 to 225; the sequence is VVGLTGGIGS…QDYLKLAQQL (200 aa). Residue 34–39 participates in ATP binding; sequence GSGKSA.

It belongs to the CoaE family.

The protein localises to the cytoplasm. The catalysed reaction is 3'-dephospho-CoA + ATP = ADP + CoA + H(+). It participates in cofactor biosynthesis; coenzyme A biosynthesis; CoA from (R)-pantothenate: step 5/5. Catalyzes the phosphorylation of the 3'-hydroxyl group of dephosphocoenzyme A to form coenzyme A. The polypeptide is Dephospho-CoA kinase (Psychrobacter arcticus (strain DSM 17307 / VKM B-2377 / 273-4)).